The sequence spans 323 residues: Acetyl-coenzyme A carboxylase carboxyl transferase subunit alpha (323 aa).

In terms of domain architecture, CoA carboxyltransferase C-terminal spans N32–S293.

It belongs to the AccA family. Acetyl-CoA carboxylase is a heterohexamer composed of biotin carboxyl carrier protein (AccB), biotin carboxylase (AccC) and two subunits each of ACCase subunit alpha (AccA) and ACCase subunit beta (AccD).

Its subcellular location is the cytoplasm. The catalysed reaction is N(6)-carboxybiotinyl-L-lysyl-[protein] + acetyl-CoA = N(6)-biotinyl-L-lysyl-[protein] + malonyl-CoA. The protein operates within lipid metabolism; malonyl-CoA biosynthesis; malonyl-CoA from acetyl-CoA: step 1/1. Its function is as follows. Component of the acetyl coenzyme A carboxylase (ACC) complex. First, biotin carboxylase catalyzes the carboxylation of biotin on its carrier protein (BCCP) and then the CO(2) group is transferred by the carboxyltransferase to acetyl-CoA to form malonyl-CoA. The sequence is that of Acetyl-coenzyme A carboxylase carboxyl transferase subunit alpha from Alcanivorax borkumensis (strain ATCC 700651 / DSM 11573 / NCIMB 13689 / SK2).